We begin with the raw amino-acid sequence, 732 residues long: Catalase-peroxidase (732 aa).

Residues 1 to 45 form the signal peptide; it reads MDTKVDNAGKCPVVHTHTAHGGRSNRDWWPNQLNLRILHQNSSLS. Positions 97-220 form a cross-link, tryptophyl-tyrosyl-methioninium (Trp-Tyr) (with M-246); it reads WHSAGTYRTG…LSAVQMGLIY (124 aa). The active-site Proton acceptor is the His-98. A cross-link (tryptophyl-tyrosyl-methioninium (Tyr-Met) (with W-97)) is located at residues 220-246; it reads YVNPEGPNGNPDPLAAARDIRETFARM. His-261 is a heme b binding site.

The protein belongs to the peroxidase family. Peroxidase/catalase subfamily. Homodimer or homotetramer. The cofactor is heme b. Formation of the three residue Trp-Tyr-Met cross-link is important for the catalase, but not the peroxidase activity of the enzyme.

The catalysed reaction is H2O2 + AH2 = A + 2 H2O. It carries out the reaction 2 H2O2 = O2 + 2 H2O. In terms of biological role, bifunctional enzyme with both catalase and broad-spectrum peroxidase activity. The polypeptide is Catalase-peroxidase (Rhizobium rhizogenes (strain K84 / ATCC BAA-868) (Agrobacterium radiobacter)).